Consider the following 962-residue polypeptide: Putative primase C962R (962 aa).

Positions 607–775 (ELDARLWIMF…PDPNNSYEKK (169 aa)) constitute an SF3 helicase domain. Residue 636-643 (GGGCNGKT) participates in ATP binding.

Belongs to the asfivirus helicase C962R family.

The protein is Putative primase C962R of African swine fever virus (isolate Pig/Kenya/KEN-50/1950) (ASFV).